Consider the following 179-residue polypeptide: Large ribosomal subunit protein uL6 (179 aa).

It belongs to the universal ribosomal protein uL6 family. As to quaternary structure, part of the 50S ribosomal subunit.

In terms of biological role, this protein binds to the 23S rRNA, and is important in its secondary structure. It is located near the subunit interface in the base of the L7/L12 stalk, and near the tRNA binding site of the peptidyltransferase center. The sequence is that of Large ribosomal subunit protein uL6 from Trichlorobacter lovleyi (strain ATCC BAA-1151 / DSM 17278 / SZ) (Geobacter lovleyi).